The primary structure comprises 187 residues: Adenylate kinase (187 aa).

G10–T15 is a binding site for ATP. The tract at residues S30–V59 is NMP. AMP is bound by residues T31, R36, N57 to V59, G85 to R88, and Q92. An LID region spans residues G126–D136. An ATP-binding site is contributed by R127. R133 and R144 together coordinate AMP. G172 is a binding site for ATP.

This sequence belongs to the adenylate kinase family. As to quaternary structure, monomer.

It is found in the cytoplasm. The enzyme catalyses AMP + ATP = 2 ADP. It participates in purine metabolism; AMP biosynthesis via salvage pathway; AMP from ADP: step 1/1. Functionally, catalyzes the reversible transfer of the terminal phosphate group between ATP and AMP. Plays an important role in cellular energy homeostasis and in adenine nucleotide metabolism. The polypeptide is Adenylate kinase (Stenotrophomonas maltophilia (strain R551-3)).